A 224-amino-acid polypeptide reads, in one-letter code: MSVLVITGTGTEVGKTVVTAAIAALAPGRVAVLKAAQTGVAAGEDGDVAEVARLAGPVTAVELARYPEPLAPATAARRAGAPPVRPAQVAEAARELDREHDLVLVEGAGGLLVRYDDGGTLADVAVALSAPVLVVAHGGLGTLNAAALTAEALRARGVECAGVVVGSWPSAPDLACRCNLDDLPEVTGAPLLGVLPEGAAADPAAFGDIARAGLAPALGGRWSR.

12 to 17 contacts ATP; it reads EVGKTV. Thr-16 provides a ligand contact to Mg(2+). Residue Lys-34 is part of the active site. Thr-38 provides a ligand contact to substrate. Residues Asp-47, 106 to 109, 166 to 167, and 196 to 198 contribute to the ATP site; these read EGAG, GS, and PEG. The Mg(2+) site is built by Asp-47 and Glu-106.

It belongs to the dethiobiotin synthetase family. Homodimer. Mg(2+) serves as cofactor.

The protein localises to the cytoplasm. The catalysed reaction is (7R,8S)-7,8-diammoniononanoate + CO2 + ATP = (4R,5S)-dethiobiotin + ADP + phosphate + 3 H(+). It functions in the pathway cofactor biosynthesis; biotin biosynthesis; biotin from 7,8-diaminononanoate: step 1/2. In terms of biological role, catalyzes a mechanistically unusual reaction, the ATP-dependent insertion of CO2 between the N7 and N8 nitrogen atoms of 7,8-diaminopelargonic acid (DAPA, also called 7,8-diammoniononanoate) to form a ureido ring. The sequence is that of ATP-dependent dethiobiotin synthetase BioD from Saccharopolyspora erythraea (strain ATCC 11635 / DSM 40517 / JCM 4748 / NBRC 13426 / NCIMB 8594 / NRRL 2338).